A 506-amino-acid chain; its full sequence is MASQQAPAKDLQTNNLEFTPSHSSGVQWVEDISNSPSAQLNFSPSNNGCWATQELQSLWKMFNSWLQPEKQTKEQMISQLVLEQFLLIGHCKDKYALTEKWKASGSDMRRFMESLTDECLKPPVMVHVSMQGQEALFSENMPLKEVIKLLKQQQSATRPTPDNEQMPVDTTQDRLLATGQENSENECNNSCNATEANVGESCSGNEMDSLLIIQKEQYPEHEEGNVVFQFPLDARRASQGNSSHHVDFRSAPTPADVPMEEQPKDLSRENISEDKNNCYNTSRNAATQVYRSDNIPRKKTDSLSINKRIYHSEPEEGDIPYGVPQDSTRASQGTSTCLQESLGECFSEKDPRELPGLESRQEEPISDPVFLGKDHEANLPCESHQKRFRRDAKLFKCEECSRMFKHARSLSSHQRTHLNKKSELLCVTCQKMFKRVSDRRTHEIIHMPEKPFKCSTCEKSFSHKTNLKSHEMIHTGEMPYVCSLCSRRFRQSSTYHRHLRNYHRSD.

The 83-residue stretch at 37 to 119 folds into the SCAN box domain; that stretch reads SAQLNFSPSN…RFMESLTDEC (83 aa). The segment at 238 to 264 is disordered; sequence SQGNSSHHVDFRSAPTPADVPMEEQPK. C2H2-type zinc fingers lie at residues 395–417, 424–446, 452–474, and 480–503; these read FKCE…QRTH, LLCV…EIIH, FKCS…EMIH, and YVCS…RNYH.

As to expression, highly expressed at the 2-cell stage but its expression is rapidly turned off.

It is found in the nucleus. Its subcellular location is the chromosome. It localises to the telomere. Its function is as follows. Transcription factor required to regulate early development. Binds telomeres and plays a key role in genomic stability by regulating telomere elongation. Acts as an activator of spontaneous telomere sister chromatid exchange (T-SCE) and telomere elongation. This is Zinc finger and SCAN domain containing protein 4D (Zscan4d) from Mus musculus (Mouse).